Consider the following 513-residue polypeptide: ATP synthase subunit alpha (513 aa).

An ATP-binding site is contributed by 169–176 (GDRQTGKT).

It belongs to the ATPase alpha/beta chains family. As to quaternary structure, F-type ATPases have 2 components, CF(1) - the catalytic core - and CF(0) - the membrane proton channel. CF(1) has five subunits: alpha(3), beta(3), gamma(1), delta(1), epsilon(1). CF(0) has three main subunits: a(1), b(2) and c(9-12). The alpha and beta chains form an alternating ring which encloses part of the gamma chain. CF(1) is attached to CF(0) by a central stalk formed by the gamma and epsilon chains, while a peripheral stalk is formed by the delta and b chains.

Its subcellular location is the cell inner membrane. It catalyses the reaction ATP + H2O + 4 H(+)(in) = ADP + phosphate + 5 H(+)(out). Its function is as follows. Produces ATP from ADP in the presence of a proton gradient across the membrane. The alpha chain is a regulatory subunit. The protein is ATP synthase subunit alpha of Yersinia enterocolitica serotype O:8 / biotype 1B (strain NCTC 13174 / 8081).